The following is a 44-amino-acid chain: MDSPAFFFTFFLWFLLLSATGYSIYVSFGPPSKKLRDPFEEHED.

The chain crosses the membrane as a helical span at residues 6–26 (FFFTFFLWFLLLSATGYSIYV).

The protein belongs to the PsbN family.

It localises to the plastid. Its subcellular location is the chloroplast thylakoid membrane. Its function is as follows. May play a role in photosystem I and II biogenesis. The polypeptide is Protein PsbN (Tetradesmus obliquus (Green alga)).